An 819-amino-acid polypeptide reads, in one-letter code: Nuclear pore complex protein Nup93 (819 aa).

The residue at position 49 (threonine 49) is a Phosphothreonine. 7 positions are modified to phosphoserine: serine 52, serine 66, serine 72, serine 75, serine 80, serine 430, and serine 767.

Belongs to the nucleoporin interacting component (NIC) family. In terms of assembly, part of the nuclear pore complex (NPC). Component of the p62 complex, a complex composed of NUP62 and NUP54. Forms a complex with NUP35, NUP155, NUP205 and lamin B; the interaction with NUP35 is direct. Does not interact with TPR. Interacts with SMAD4 and IPO7; translocates SMAD4 to the nucleus through the NPC upon BMP7 stimulation resulting in activation of SMAD4 signaling.

It localises to the nucleus membrane. Its subcellular location is the nucleus. The protein resides in the nuclear pore complex. It is found in the nucleus envelope. Plays a role in the nuclear pore complex (NPC) assembly and/or maintenance. May anchor nucleoporins, but not NUP153 and TPR, to the NPC. During renal development, regulates podocyte migration and proliferation through SMAD4 signaling. The chain is Nuclear pore complex protein Nup93 (NUP93) from Pongo abelii (Sumatran orangutan).